The primary structure comprises 170 residues: NADH-quinone oxidoreductase subunit B (170 aa).

The [4Fe-4S] cluster site is built by Cys37, Cys38, Cys102, and Cys131.

It belongs to the complex I 20 kDa subunit family. As to quaternary structure, NDH-1 is composed of 14 different subunits. Subunits NuoB, C, D, E, F, and G constitute the peripheral sector of the complex. Requires [4Fe-4S] cluster as cofactor.

The protein localises to the cell inner membrane. The enzyme catalyses a quinone + NADH + 5 H(+)(in) = a quinol + NAD(+) + 4 H(+)(out). NDH-1 shuttles electrons from NADH, via FMN and iron-sulfur (Fe-S) centers, to quinones in the respiratory chain. The immediate electron acceptor for the enzyme in this species is believed to be ubiquinone. Couples the redox reaction to proton translocation (for every two electrons transferred, four hydrogen ions are translocated across the cytoplasmic membrane), and thus conserves the redox energy in a proton gradient. This is NADH-quinone oxidoreductase subunit B from Geobacter metallireducens (strain ATCC 53774 / DSM 7210 / GS-15).